The following is a 287-amino-acid chain: T-cell ecto-ADP-ribosyltransferase 1 (287 aa).

Residues 1–20 (MPSNNFKFFLTWWLTQQVTG) form the signal peptide. Disulfide bonds link Cys41-Cys246, Cys80-Cys201, and Cys141-Cys193. Positions 61–241 (EELKLEWEKA…ISLDSPKRKK (181 aa)) constitute a TR mART core domain. NAD(+)-binding residues include Tyr98 and Arg146. Residues Arg146 and Ser167 contribute to the active site. Asn171 is a glycosylation site (N-linked (GlcNAc...) asparagine). Ser202 is an NAD(+) binding site. Glu209 is a catalytic residue. The N-linked (GlcNAc...) asparagine glycan is linked to Asn256. A lipid anchor (GPI-anchor amidated serine) is attached at Ser258. Positions 259–287 (SLGSRESCVSLFLVVLLGLLVQQLTLAEP) are cleaved as a propeptide — removed in mature form.

The protein belongs to the Arg-specific ADP-ribosyltransferase family. It is proposed that in the absence of reducing agents, a disulfide bond is formed between Cys-80 and Cys-201, leading to a conformational change that reduces the catalytic rate of NAD glycohydrolysis. In terms of tissue distribution, expressed in spleen, intestine and thymus.

The protein localises to the cell membrane. It carries out the reaction L-arginyl-[protein] + NAD(+) = N(omega)-(ADP-D-ribosyl)-L-arginyl-[protein] + nicotinamide + H(+). The catalysed reaction is NAD(+) + H2O = ADP-D-ribose + nicotinamide + H(+). In terms of biological role, has both ADP-ribosyltransferase activity and thiol-dependent NAD(+) glycohydrolase activity. This chain is T-cell ecto-ADP-ribosyltransferase 1 (Art2a), found in Mus musculus (Mouse).